A 444-amino-acid polypeptide reads, in one-letter code: UDP-N-acetylglucosamine 1-carboxyvinyltransferase (444 aa).

22 to 23 (KN) is a binding site for phosphoenolpyruvate. R94 serves as a coordination point for UDP-N-acetyl-alpha-D-glucosamine. D119 functions as the Proton donor in the catalytic mechanism. 2 residues coordinate UDP-N-acetyl-alpha-D-glucosamine: D309 and V331.

This sequence belongs to the EPSP synthase family. MurA subfamily.

The protein localises to the cytoplasm. It catalyses the reaction phosphoenolpyruvate + UDP-N-acetyl-alpha-D-glucosamine = UDP-N-acetyl-3-O-(1-carboxyvinyl)-alpha-D-glucosamine + phosphate. The protein operates within cell wall biogenesis; peptidoglycan biosynthesis. Cell wall formation. Adds enolpyruvyl to UDP-N-acetylglucosamine. The sequence is that of UDP-N-acetylglucosamine 1-carboxyvinyltransferase from Chlamydia trachomatis serovar D (strain ATCC VR-885 / DSM 19411 / UW-3/Cx).